A 247-amino-acid chain; its full sequence is Small ribosomal subunit protein uS2 (247 aa).

This sequence belongs to the universal ribosomal protein uS2 family.

In Pseudomonas syringae pv. tomato (strain ATCC BAA-871 / DC3000), this protein is Small ribosomal subunit protein uS2.